Here is a 673-residue protein sequence, read N- to C-terminus: tRNA 5-methylaminomethyl-2-thiouridine biosynthesis bifunctional protein MnmC (673 aa).

The tract at residues 1 to 245 (MSHAPIQTAA…KREMLIGELP (245 aa)) is tRNA (mnm(5)s(2)U34)-methyltransferase. The FAD-dependent cmnm(5)s(2)U34 oxidoreductase stretch occupies residues 272–673 (IGGGVASALT…VRKLLKGRAV (402 aa)).

This sequence in the N-terminal section; belongs to the methyltransferase superfamily. tRNA (mnm(5)s(2)U34)-methyltransferase family. In the C-terminal section; belongs to the DAO family. It depends on FAD as a cofactor.

It is found in the cytoplasm. The catalysed reaction is 5-aminomethyl-2-thiouridine(34) in tRNA + S-adenosyl-L-methionine = 5-methylaminomethyl-2-thiouridine(34) in tRNA + S-adenosyl-L-homocysteine + H(+). Functionally, catalyzes the last two steps in the biosynthesis of 5-methylaminomethyl-2-thiouridine (mnm(5)s(2)U) at the wobble position (U34) in tRNA. Catalyzes the FAD-dependent demodification of cmnm(5)s(2)U34 to nm(5)s(2)U34, followed by the transfer of a methyl group from S-adenosyl-L-methionine to nm(5)s(2)U34, to form mnm(5)s(2)U34. The protein is tRNA 5-methylaminomethyl-2-thiouridine biosynthesis bifunctional protein MnmC of Serratia proteamaculans (strain 568).